We begin with the raw amino-acid sequence, 551 residues long: Palmdelphin (551 aa).

Position 1 is an N-acetylmethionine (Met-1). Residues 12 to 106 (QAITDKRKIQ…LQISANEEVI (95 aa)) adopt a coiled-coil conformation. Residue Lys-125 forms a Glycyl lysine isopeptide (Lys-Gly) (interchain with G-Cter in SUMO2) linkage. 2 positions are modified to phosphoserine: Ser-135 and Ser-163. Lys-178 is covalently cross-linked (Glycyl lysine isopeptide (Lys-Gly) (interchain with G-Cter in SUMO1); alternate). Lys-178 is covalently cross-linked (Glycyl lysine isopeptide (Lys-Gly) (interchain with G-Cter in SUMO2); alternate). The segment covering 247–258 (ERNSKSPTEYHE) has biased composition (basic and acidic residues). Residues 247-267 (ERNSKSPTEYHEPVYANPFCR) form a disordered region. The residue at position 270 (Thr-270) is a Phosphothreonine. Disordered stretches follow at residues 298–387 (HESE…CSSP) and 452–536 (EDDE…DPSL). A phosphoserine mark is found at Ser-322, Ser-350, Ser-371, Ser-376, Ser-385, and Ser-386. The segment covering 484-495 (KRSEVSPHENTN) has biased composition (basic and acidic residues). A phosphoserine mark is found at Ser-498, Ser-515, and Ser-520.

The protein belongs to the paralemmin family. As to quaternary structure, interacts with GLUL. In terms of processing, phosphorylated. Expressed in the brain and the spinal cord. Expressed in the anterior olfactory nucleus, the olfactory tubercle, the nucleus supraopticus, the nucleus of the lateral olfactory tract, the piriform cortex, the cortico-amygdaloid transition zone, the septofimbrial nucleus and the indusium griseum (at protein level).

It is found in the cytoplasm. It localises to the cell projection. The protein localises to the dendrite. The protein resides in the dendritic spine. This Rattus norvegicus (Rat) protein is Palmdelphin (Palmd).